The chain runs to 154 residues: 3-hydroxyacyl-[acyl-carrier-protein] dehydratase FabZ (154 aa).

His60 is an active-site residue.

This sequence belongs to the thioester dehydratase family. FabZ subfamily.

It is found in the cytoplasm. It catalyses the reaction a (3R)-hydroxyacyl-[ACP] = a (2E)-enoyl-[ACP] + H2O. In terms of biological role, involved in unsaturated fatty acids biosynthesis. Catalyzes the dehydration of short chain beta-hydroxyacyl-ACPs and long chain saturated and unsaturated beta-hydroxyacyl-ACPs. This chain is 3-hydroxyacyl-[acyl-carrier-protein] dehydratase FabZ, found in Actinobacillus pleuropneumoniae serotype 5b (strain L20).